The sequence spans 101 residues: Putative pterin-4-alpha-carbinolamine dehydratase (101 aa).

Belongs to the pterin-4-alpha-carbinolamine dehydratase family.

The enzyme catalyses (4aS,6R)-4a-hydroxy-L-erythro-5,6,7,8-tetrahydrobiopterin = (6R)-L-erythro-6,7-dihydrobiopterin + H2O. This is Putative pterin-4-alpha-carbinolamine dehydratase from Rhizobium johnstonii (strain DSM 114642 / LMG 32736 / 3841) (Rhizobium leguminosarum bv. viciae).